Consider the following 91-residue polypeptide: UPF0147 protein DKAM_0139 (91 aa).

This sequence belongs to the UPF0147 family.

The sequence is that of UPF0147 protein DKAM_0139 from Desulfurococcus amylolyticus (strain DSM 18924 / JCM 16383 / VKM B-2413 / 1221n) (Desulfurococcus kamchatkensis).